Consider the following 690-residue polypeptide: Adhesion G protein-coupled receptor L4 (690 aa).

Positions 1–19 are cleaved as a signal peptide; it reads MKRLPLLVVFSTLLNCSYT. One can recognise an EGF-like 1 domain in the interval 20–57; the sequence is QNCTKTPCLPNAKCEIRNGIEACYCNMGFSGNGVTICE. The Extracellular segment spans residues 20–432; the sequence is QNCTKTPCLP…DYNILTRITQ (413 aa). An N-linked (GlcNAc...) asparagine glycan is attached at asparagine 21. 6 disulfide bridges follow: cysteine 22/cysteine 33, cysteine 27/cysteine 42, cysteine 44/cysteine 56, cysteine 62/cysteine 75, cysteine 69/cysteine 84, and cysteine 86/cysteine 107. The EGF-like 2; calcium-binding domain maps to 58–108; it reads DDNECGNLTQSCGENANCTNTEGSYYCMCVPGFRSSSNQDRFITNDGTVCI. N-linked (GlcNAc...) asparagine glycosylation is found at asparagine 64 and asparagine 74. Asparagine 127, asparagine 177, asparagine 188, asparagine 249, asparagine 381, and asparagine 395 each carry an N-linked (GlcNAc...) asparagine glycan. The 176-residue stretch at 244-419 folds into the GAIN-B domain; sequence TEFDTNSTDI…AILMSSGPSI (176 aa). 2 disulfides stabilise this stretch: cysteine 370–cysteine 401 and cysteine 389–cysteine 403. Residues 370–419 are GPS; that stretch reads CAFWNYSPDTMNGSWSSEGCELTYSNETHTSCRCNHLTHFAILMSSGPSI. A helical membrane pass occupies residues 433-453; sequence LGIIISLICLAICIFTFWFFS. At 454–460 the chain is on the cytoplasmic side; that stretch reads EIQSTRT. Residues 461–481 traverse the membrane as a helical segment; the sequence is TIHKNLCCSLFLAELVFLVGI. At 482-499 the chain is on the extracellular side; the sequence is NTNTNKLFCSIIAGLLHY. A helical transmembrane segment spans residues 500–520; it reads FFLAAFAWMCIEGIHLYLIVV. At 521 to 532 the chain is on the cytoplasmic side; sequence GVIYNKGFLHKN. A helical membrane pass occupies residues 533-553; sequence FYIFGYLSPAVVVGFSAALGY. The Extracellular portion of the chain corresponds to 554 to 573; the sequence is RYYGTTKVCWLSTENNFIWS. A helical transmembrane segment spans residues 574–594; the sequence is FIGPACLIILVNLLAFGVIIY. The Cytoplasmic portion of the chain corresponds to 595–618; that stretch reads KVFRHTAGLKPEVSCFENIRSCAR. Residues 619-639 form a helical membrane-spanning segment; it reads GALALLFLLGTTWIFGVLHVV. Residues 640–646 lie on the Extracellular side of the membrane; the sequence is HASVVTA. The helical transmembrane segment at 647-667 threads the bilayer; sequence YLFTVSNAFQGMFIFLFLCVL. Topologically, residues 668-690 are cytoplasmic; it reads SRKIQEEYYRLFKNVPCCFGCLR.

The protein belongs to the G-protein coupled receptor 2 family. Adhesion G-protein coupled receptor (ADGR) subfamily. In terms of assembly, heterodimer of 2 chains generated by proteolytic processing; the large extracellular N-terminal fragment and the membrane-bound C-terminal fragment predominantly remain associated and non-covalently linked. Post-translationally, glycosylated. In terms of processing, proteolytically cleaved into 2 subunits, an extracellular alpha subunit and a seven-transmembrane subunit. Detected in the majority of epithelial cells in tumor and normal tissues. Expressed also in human umbilical vein endothelial cells.

It is found in the cell membrane. Functionally, endothelial orphan receptor that acts as a key regulator of angiogenesis. The polypeptide is Adhesion G protein-coupled receptor L4 (Homo sapiens (Human)).